Reading from the N-terminus, the 862-residue chain is Eukaryotic translation initiation factor 3 subunit C (862 aa).

Residues 1-10 are compositionally biased toward gly residues; the sequence is MSRFFYGGGS. The disordered stretch occupies residues 1 to 81; it reads MSRFFYGGGS…DEEKTTVVKS (81 aa). Residues 16-52 show a composition bias toward acidic residues; the sequence is SSDEEELYERDEEEQSEEEESSEEEETSEEGSDDEEG. The region spanning 601–775 is the PCI domain; the sequence is FHMHINLELL…GAIVFRKGVE (175 aa). The segment at 814–862 is disordered; sequence RDQGAGARGGRGGGRGGHARGGARFPGQQGRRPGGQQFGGGALGGAIKA. A compositionally biased stretch (gly residues) spans 819–833; that stretch reads GARGGRGGGRGGHAR. The span at 835–844 shows a compositional bias: low complexity; the sequence is GARFPGQQGR. Gly residues predominate over residues 845–862; it reads RPGGQQFGGGALGGAIKA.

The protein belongs to the eIF-3 subunit C family. Component of the eukaryotic translation initiation factor 3 (eIF-3) complex.

The protein localises to the cytoplasm. Functionally, component of the eukaryotic translation initiation factor 3 (eIF-3) complex, which is involved in protein synthesis of a specialized repertoire of mRNAs and, together with other initiation factors, stimulates binding of mRNA and methionyl-tRNAi to the 40S ribosome. The eIF-3 complex specifically targets and initiates translation of a subset of mRNAs involved in cell proliferation. The sequence is that of Eukaryotic translation initiation factor 3 subunit C (nip1) from Aspergillus clavatus (strain ATCC 1007 / CBS 513.65 / DSM 816 / NCTC 3887 / NRRL 1 / QM 1276 / 107).